We begin with the raw amino-acid sequence, 203 residues long: MSNLFIPRSTKRAVYDGPLPMVGSSLPPIEINSKGDKSVVYLRGDDQPIDVNREHRMVKVTYNEYDEQETIKVIFLDKKATIKDLHNLMSVGRDLTTGVCNIEVQPEYGFTLRIPDPDKLKYKSDIDAVYRLFASKYDNSDLFERASESLAFQITLDMNRERKDPKVLGITGDARGWETAPDLIGDYMDVVTNNYMSRYMKGV.

This is an uncharacterized protein from Magallana gigas (Pacific oyster).